We begin with the raw amino-acid sequence, 286 residues long: Bifunctional protein FolD (286 aa).

NADP(+) contacts are provided by residues 168–170, T195, and V236; that span reads GRG.

This sequence belongs to the tetrahydrofolate dehydrogenase/cyclohydrolase family. As to quaternary structure, homodimer.

The enzyme catalyses (6R)-5,10-methylene-5,6,7,8-tetrahydrofolate + NADP(+) = (6R)-5,10-methenyltetrahydrofolate + NADPH. The catalysed reaction is (6R)-5,10-methenyltetrahydrofolate + H2O = (6R)-10-formyltetrahydrofolate + H(+). The protein operates within one-carbon metabolism; tetrahydrofolate interconversion. In terms of biological role, catalyzes the oxidation of 5,10-methylenetetrahydrofolate to 5,10-methenyltetrahydrofolate and then the hydrolysis of 5,10-methenyltetrahydrofolate to 10-formyltetrahydrofolate. This Mycolicibacterium fortuitum (Mycobacterium fortuitum) protein is Bifunctional protein FolD.